The following is a 403-amino-acid chain: Calcium-responsive transactivator (403 aa).

An N-terminal auto-inhibitory domain region spans residues 1 to 148 (MSVAFASARP…TLPTTTMSMA (148 aa)). The short motif at 50 to 53 (YQQI) is the SH2-binding element. Disordered regions lie at residues 72 to 111 (QSLLPAPPTQNMNLGPGGMSQTGPSQTLHSQGNLSEALGS), 152 to 171 (HGSAPGYSHTVPSSQNVPMQ), 224 to 303 (NQSS…RTFE), and 318 to 403 (SQQQ…NYQQ). Composition is skewed to polar residues over residues 92-105 (QTGPSQTLHSQGNL) and 161-171 (TVPSSQNVPMQ). Residues 149–238 (VSTHGSAPGY…GSSMMGQRPL (90 aa)) form a methionine-rich intra-molecular domain region. Residues 224–235 (NQSSQGSSMMGQ) show a composition bias toward low complexity. The tract at residues 252–324 (YLGQEEYYSE…AQYSQQQTGY (73 aa)) is MFD domain. Over residues 263 to 277 (YGHSQGSSEAMTPQY) the composition is skewed to polar residues. The span at 286 to 296 (YSYQQSSYGEQ) shows a compositional bias: low complexity. The tract at residues 341 to 403 (NQQNYPGQQQ…EQGQYGNYQQ (63 aa)) is necessary for nuclear localization. The short motif at 360–363 (SQYS) is the SH2-binding element. Positions 378–386 (TSQTTSTAQ) match the SH3-binding motif. Positions 398–401 (YGNY) match the SH2-binding motif.

This sequence belongs to the SS18 family. Homodimer.

The protein resides in the nucleus. In terms of biological role, transcriptional activator which may be required for calcium-dependent dendritic growth and branching in cortical neurons. This chain is Calcium-responsive transactivator (ss18l1), found in Xenopus laevis (African clawed frog).